Consider the following 808-residue polypeptide: Protein translocase subunit SecA 2 (808 aa).

ATP is bound by residues Gln124, 142-146, and Asp535; that span reads GEGKT.

This sequence belongs to the SecA family. As to quaternary structure, monomer and homodimer. Part of the essential Sec protein translocation apparatus which comprises SecA, SecYEG and auxiliary proteins SecDF. Other proteins may also be involved.

The protein resides in the cell membrane. It is found in the cytoplasm. The enzyme catalyses ATP + H2O + cellular proteinSide 1 = ADP + phosphate + cellular proteinSide 2.. Functionally, part of the Sec protein translocase complex. Interacts with the SecYEG preprotein conducting channel. Has a central role in coupling the hydrolysis of ATP to the transfer of proteins into and across the cell membrane, serving as an ATP-driven molecular motor driving the stepwise translocation of polypeptide chains across the membrane. The sequence is that of Protein translocase subunit SecA 2 from Mycobacterium bovis (strain BCG / Pasteur 1173P2).